Reading from the N-terminus, the 233-residue chain is 7-cyano-7-deazaguanine synthase (233 aa).

7–17 (CSGGLDSVSLA) contributes to the ATP binding site. 4 residues coordinate Zn(2+): cysteine 185, cysteine 193, cysteine 196, and cysteine 199.

It belongs to the QueC family. It depends on Zn(2+) as a cofactor.

The enzyme catalyses 7-carboxy-7-deazaguanine + NH4(+) + ATP = 7-cyano-7-deazaguanine + ADP + phosphate + H2O + H(+). It functions in the pathway purine metabolism; 7-cyano-7-deazaguanine biosynthesis. Catalyzes the ATP-dependent conversion of 7-carboxy-7-deazaguanine (CDG) to 7-cyano-7-deazaguanine (preQ(0)). The protein is 7-cyano-7-deazaguanine synthase of Paracoccus denitrificans (strain Pd 1222).